The sequence spans 429 residues: MEVNDGERVVIAKPVASRPSSSSGFRTFTELLTDSVTVSPQTTCHEIVDAAIRPKTLRFNQPVAASVSCPRAEVKGIGNGMSCDDDSDSRNYVVYKPKAKLVSKATVSALANMLQGNRQQTWRQSEAVSYGKSVSQGTHRAGPNLVQKVPSFTESETSTGDRSSVDGYNWRKYGQKQVKGSECPRSYYKCTHPKCPVKKKVERSVEGQVSEIVYQGEHNHSKPSCPLPRRASSSISSGFQKPPKSIASEGSMGQDPNNNLYSPLWNNQSNDSTQNRTEKMSEGCVITPFEFAVPRSTNSNPGTSDSGCKSSQCDEGELDDPSRSKRRKNEKQSSEAGVSQGSVESDSLEDGFRWRKYGQKVVGGNAYPRSYYRCTSANCRARKHVERASDDPRAFITTYEGKHNHHLLLSPPSSSTLPFNSPQLSKQTI.

A DNA-binding region (WRKY 1) is located at residues 159–223 (TGDRSSVDGY…YQGEHNHSKP (65 aa)). Residues Cys190, Cys195, His218, and His220 each coordinate Zn(2+). Disordered stretches follow at residues 214–279 (YQGE…RTEK) and 292–348 (AVPR…SDSL). Polar residues-rich tracts occupy residues 254–275 (QDPN…STQN), 295–313 (RSTN…SSQC), and 334–345 (SEAGVSQGSVES). Residues 343 to 408 (VESDSLEDGF…YEGKHNHHLL (66 aa)) constitute a DNA-binding region (WRKY 2). Residues Cys374, Cys379, His403, and His405 each contribute to the Zn(2+) site. A compositionally biased stretch (low complexity) spans 410–422 (SPPSSSTLPFNSP). A disordered region spans residues 410–429 (SPPSSSTLPFNSPQLSKQTI).

The protein belongs to the WRKY group I family. As to expression, leaf promordia, trichomes, atrichoblasts, fertilized eggs, seed coat.

It is found in the nucleus. In terms of biological role, transcription factor. Interacts specifically with the W box (5'-(T)TGAC[CT]-3'), a frequently occurring elicitor-responsive cis-acting element. Regulates trichome development, production of mucilage and tannin in seed coats, and maybe root hair development. The chain is WRKY transcription factor 44 (WRKY44) from Arabidopsis thaliana (Mouse-ear cress).